We begin with the raw amino-acid sequence, 322 residues long: Acetyl-coenzyme A carboxylase carboxyl transferase subunit beta (322 aa).

One can recognise a CoA carboxyltransferase N-terminal domain in the interval 24–293; it reads LWIKCPDTGQ…PAVEEPAVVD (270 aa).

The protein belongs to the AccD/PCCB family. Acetyl-CoA carboxylase is a heterohexamer composed of biotin carboxyl carrier protein (AccB), biotin carboxylase (AccC) and two subunits each of ACCase subunit alpha (AccA) and ACCase subunit beta (AccD).

Its subcellular location is the cytoplasm. The enzyme catalyses N(6)-carboxybiotinyl-L-lysyl-[protein] + acetyl-CoA = N(6)-biotinyl-L-lysyl-[protein] + malonyl-CoA. It participates in lipid metabolism; malonyl-CoA biosynthesis; malonyl-CoA from acetyl-CoA: step 1/1. In terms of biological role, component of the acetyl coenzyme A carboxylase (ACC) complex. Biotin carboxylase (BC) catalyzes the carboxylation of biotin on its carrier protein (BCCP) and then the CO(2) group is transferred by the transcarboxylase to acetyl-CoA to form malonyl-CoA. This chain is Acetyl-coenzyme A carboxylase carboxyl transferase subunit beta, found in Rhodopseudomonas palustris (strain HaA2).